The sequence spans 417 residues: NADH-quinone oxidoreductase subunit D (417 aa).

This sequence belongs to the complex I 49 kDa subunit family. In terms of assembly, NDH-1 is composed of 14 different subunits. Subunits NuoB, C, D, E, F, and G constitute the peripheral sector of the complex.

Its subcellular location is the cell inner membrane. It catalyses the reaction a quinone + NADH + 5 H(+)(in) = a quinol + NAD(+) + 4 H(+)(out). Its function is as follows. NDH-1 shuttles electrons from NADH, via FMN and iron-sulfur (Fe-S) centers, to quinones in the respiratory chain. The immediate electron acceptor for the enzyme in this species is believed to be ubiquinone. Couples the redox reaction to proton translocation (for every two electrons transferred, four hydrogen ions are translocated across the cytoplasmic membrane), and thus conserves the redox energy in a proton gradient. In Burkholderia lata (strain ATCC 17760 / DSM 23089 / LMG 22485 / NCIMB 9086 / R18194 / 383), this protein is NADH-quinone oxidoreductase subunit D.